Here is a 319-residue protein sequence, read N- to C-terminus: Putative GPI-anchor transamidase (319 aa).

The N-terminal stretch at 1 to 16 (MRHVLLIFCAIIATEA) is a signal peptide. Active-site residues include His156 and Cys198. N-linked (GlcNAc...) asparagine glycosylation occurs at Asn257.

This sequence belongs to the peptidase C13 family.

It functions in the pathway glycolipid biosynthesis; glycosylphosphatidylinositol-anchor biosynthesis. In terms of biological role, mediates GPI anchoring in the endoplasmic reticulum, by replacing a protein's C-terminal GPI attachment signal peptide with a pre-assembled GPI. During this transamidation reaction, the GPI transamidase forms a carbonyl intermediate with the substrate protein. This Caenorhabditis elegans protein is Putative GPI-anchor transamidase.